A 385-amino-acid polypeptide reads, in one-letter code: Single-stranded DNA-binding protein 4 (385 aa).

Met1 is subject to N-acetylmethionine. The LisH domain maps to 17 to 49 (AREKLALYVYEYLLHIGAQKSAQTFLSEIRWEK). Disordered regions lie at residues 122 to 287 (FQGP…NSSE) and 331 to 363 (GSGD…GEMA). A compositionally biased stretch (low complexity) spans 245–263 (SPSGNSIPYSSSSPGSYTG). Residues 267 to 277 (GGGPPGTPIMP) show a composition bias toward pro residues. A Phosphoserine modification is found at Ser341. A Phosphothreonine modification is found at Thr355.

It localises to the nucleus. This chain is Single-stranded DNA-binding protein 4 (SSBP4), found in Homo sapiens (Human).